The following is a 579-amino-acid chain: MFS-type transporter ppz2 (579 aa).

A disordered region spans residues 1–23 (MQTATALEDSANAPSPAASSQGQ). Residues 10–20 (SANAPSPAASS) are compositionally biased toward low complexity. Residue N38 is glycosylated (N-linked (GlcNAc...) asparagine). 14 helical membrane passes run 48-68 (ALIMVALCCAVFLHALDNTII), 83-103 (AAYTWIGSTYLLAVAASTMVW), 121-141 (LCFFTGSLIAALSANFAMLIA), 145-165 (IQGIGGAGVNVLANICVGDLF), 171-191 (GLYYGVIGGVWAVALSLGPVV), 203-223 (WCFYINLPLCAVVFVIIILLL), 236-256 (IAAIDWVGAALSIGSTLMILL), 269-289 (SATVICLVVFGFIGWILCFSW), 298-318 (LLPVSIFKQIPTLAVLAACFI), 336-356 (AVLGATPILSGVYLLPTAVSI), 374-394 (LTPIYIGFVLQTLGYGLFIDL), 403-423 (IIVFQIIGGLGVGFNFQAPMV), 438-460 (TSAYNFMRNVSGAISVVIGQTVF), and 516-536 (SMWIMYTAFSAAALVVCPFLG).

This sequence belongs to the major facilitator superfamily. TCR/Tet family.

It localises to the membrane. Its function is as follows. MFS-type transporter; part of the gene cluster that mediates the biosynthesis of pyrrolopyrazines, secondary metabolites showing insecticidal activity. Probably involved in the secretion of peramine and other pyrrolopyrazines. The sequence is that of MFS-type transporter ppz2 from Metarhizium majus (strain ARSEF 297).